The sequence spans 567 residues: Sensor histidine kinase MtrB (567 aa).

Residues 1–15 (MIFGSRRRIRGRRGR) are compositionally biased toward basic residues. A disordered region spans residues 1-20 (MIFGSRRRIRGRRGRSGPMT). Transmembrane regions (helical) follow at residues 42–62 (VVALTLGLSLAVILALGFVLT) and 213–233 (GTMATGGLVLLVLLAGIALLV). Residues 235-287 (RQVVVPVRSASRIAERFAEGHLSERMPVRGEDDMARLAVSFNDMAESLSRQIA) form the HAMP domain. The region spanning 302–519 (DVSHELRTPL…CFRLTLPMVR (218 aa)) is the Histidine kinase domain. H305 is modified (phosphohistidine; by autocatalysis). A compositionally biased stretch (pro residues) spans 529–551 (PMKPIPQPVLQPVAQPNPQPMPP). The segment at 529-567 (PMKPIPQPVLQPVAQPNPQPMPPEYKERQRPREHAEWSG) is disordered. Residues 552–567 (EYKERQRPREHAEWSG) are compositionally biased toward basic and acidic residues.

As to quaternary structure, interacts with MrtA. Interacts with LpqB, probably extracytoplasmically via MtrB's sensor domain. Requires Mg(2+) as cofactor. Ca(2+) serves as cofactor. The C-terminal domain (residues 234-567) autophosphorylates.

It localises to the cell membrane. The enzyme catalyses ATP + protein L-histidine = ADP + protein N-phospho-L-histidine.. Ca(2+) ions inhibit the phosphotransfer from MtrB to MtrA. Member of the two-component regulatory system MtrA/MtrB. Probably functions as a membrane-associated protein kinase that phosphorylates MtrA in response to environmental signals. Autophosphorylates and transfers phosphate to MtrA in vitro. Overexpression of MtrA alone decreases bacterial virulence in mouse infection; co-expression of MtrA and MtrB restores normal bacterial growth, suggesting that bacterial growth in macrophages requires an optimal ratio of MtrB to MtrA. Probably plays a role in cell division. This is Sensor histidine kinase MtrB (mtrB) from Mycobacterium tuberculosis (strain ATCC 25618 / H37Rv).